The primary structure comprises 293 residues: Histone H3-like centromeric protein CSE4 (293 aa).

Residues 132–141 (QDLSYDESDY) show a composition bias toward acidic residues. Positions 132 to 169 (QDLSYDESDYSDPLQEIDSNYRESPRRTTDKILKSSSK) are disordered. Over residues 150 to 164 (SNYRESPRRTTDKIL) the composition is skewed to basic and acidic residues. Residues 157–291 (RRTTDKILKS…VQLARRIRGQ (135 aa)) form an H3-like region.

The protein belongs to the histone H3 family. Component of centromeric nucleosomes, where DNA is wrapped around a histone octamer core. The octamer contains two molecules each of H2A, H2B, CSE4/CENPA and H4 assembled in one CSE4-H4 heterotetramer and two H2A-H2B heterodimers. Interacts with the inner kinetochore. Post-translationally, ubiquitinated. Is degraded through ubiquitin-mediated proteolysis when not protected by its association to the kinetochore.

The protein resides in the nucleus. It is found in the chromosome. It localises to the centromere. Histone H3-like nucleosomal protein that is specifically found in centromeric nucleosomes. Replaces conventional H3 in the nucleosome core of centromeric chromatin that serves as an assembly site for the inner kinetochore. Required for recruitment and assembly of kinetochore proteins, mitotic progression and chromosome segregation. May serve as an epigenetic mark that propagates centromere identity through replication and cell division. The chain is Histone H3-like centromeric protein CSE4 (CSE4) from Monosporozyma servazzii (Yeast).